The primary structure comprises 502 residues: Probable cytosol aminopeptidase 2 (502 aa).

Mn(2+) contacts are provided by lysine 269 and aspartate 274. Lysine 281 is an active-site residue. Residues aspartate 292, aspartate 351, and glutamate 353 each coordinate Mn(2+). The active site involves arginine 355.

The protein belongs to the peptidase M17 family. The cofactor is Mn(2+).

The protein resides in the cytoplasm. The enzyme catalyses Release of an N-terminal amino acid, Xaa-|-Yaa-, in which Xaa is preferably Leu, but may be other amino acids including Pro although not Arg or Lys, and Yaa may be Pro. Amino acid amides and methyl esters are also readily hydrolyzed, but rates on arylamides are exceedingly low.. It catalyses the reaction Release of an N-terminal amino acid, preferentially leucine, but not glutamic or aspartic acids.. Functionally, presumably involved in the processing and regular turnover of intracellular proteins. Catalyzes the removal of unsubstituted N-terminal amino acids from various peptides. This chain is Probable cytosol aminopeptidase 2 (pepA2), found in Shewanella oneidensis (strain ATCC 700550 / JCM 31522 / CIP 106686 / LMG 19005 / NCIMB 14063 / MR-1).